We begin with the raw amino-acid sequence, 199 residues long: Puromycin N-acetyltransferase (199 aa).

Residues 6 to 198 (PTVRLATRDD…RTWCMTRKPG (193 aa)) enclose the N-acetyltransferase domain.

Its function is as follows. Detoxification of puromycin. The sequence is that of Puromycin N-acetyltransferase (pac) from Streptomyces alboniger.